We begin with the raw amino-acid sequence, 206 residues long: Sclerostin domain-containing protein 1 (206 aa).

Residues 1–23 (MLPPAIHFYLLPLACILMKSCLA) form the signal peptide. The N-linked (GlcNAc...) asparagine glycan is linked to Asn47. 4 disulfides stabilise this stretch: Cys75-Cys133, Cys89-Cys147, Cys100-Cys163, and Cys104-Cys165. Positions 75-170 (CRELRSTKYI…TACKCKRYTR (96 aa)) constitute a CTCK domain. Asn173 is a glycosylation site (N-linked (GlcNAc...) asparagine). The segment at 176-206 (SHNFESMSPAKPVQHHRERKRASKSSKHSMS) is disordered. The segment covering 188 to 206 (VQHHRERKRASKSSKHSMS) has biased composition (basic residues).

Belongs to the sclerostin family. Interacts with BMP2, BMP4, BMP6 and BMP7 with high affinity.

The protein resides in the secreted. Functionally, directly antagonizes activity of BMP2, BMP4, BMP6 and BMP7 in a dose-dependent manner. Enhances Wnt signaling and inhibits TGF-beta signaling. May be involved in the onset of endometrial receptivity for implantation/sensitization for the decidual cell reaction. This chain is Sclerostin domain-containing protein 1 (SOSTDC1), found in Pongo abelii (Sumatran orangutan).